We begin with the raw amino-acid sequence, 217 residues long: MKFFVDTANVEDIKKANDMGVICGVTTNPSLIAKEGRDFNEVIKEITSIVDGPISGEVKATTVDAEGMIKEGREIAAIHPNMVVKIPMTVEGLKAVKVLSSEGIKTNVTLIFSANQAILAANAGATYVSPFLGRLDDISQPGIELIRQISEIFDIYGYDTEIIAASIRNPIHVTDCALAGADIATIPYKVIEQMTKHPLTDQGIEKFQADYRAVFGD.

Catalysis depends on Lys-85, which acts as the Schiff-base intermediate with substrate.

It belongs to the transaldolase family. Type 3B subfamily.

The protein localises to the cytoplasm. It catalyses the reaction D-sedoheptulose 7-phosphate + D-glyceraldehyde 3-phosphate = D-erythrose 4-phosphate + beta-D-fructose 6-phosphate. It functions in the pathway carbohydrate degradation; pentose phosphate pathway; D-glyceraldehyde 3-phosphate and beta-D-fructose 6-phosphate from D-ribose 5-phosphate and D-xylulose 5-phosphate (non-oxidative stage): step 2/3. Functionally, transaldolase is important for the balance of metabolites in the pentose-phosphate pathway. This Agathobacter rectalis (strain ATCC 33656 / DSM 3377 / JCM 17463 / KCTC 5835 / VPI 0990) (Eubacterium rectale) protein is Probable transaldolase.